A 265-amino-acid chain; its full sequence is Homeobox protein engrailed-2-B (265 aa).

Basic and acidic residues-rich tracts occupy residues 1-12 and 102-115; these read MEENEQNNREVE and GEKK…ETLK. Disordered regions lie at residues 1–38, 60–138, and 156–182; these read MEEN…QPHH, INHQ…SSKA, and DRPS…PRTA. The span at 122-136 shows a compositional bias: low complexity; sequence DHSLSSDSDSSQASS. The segment at residues 176–235 is a DNA-binding region (homeobox); the sequence is DKRPRTAFTAEQLQRLKAEFQTNRYLTEQRRQSLAQELGLNESQIKIWFQNKRAKIKKST.

Belongs to the engrailed homeobox family.

It is found in the nucleus. The protein is Homeobox protein engrailed-2-B (en2-b) of Xenopus laevis (African clawed frog).